Reading from the N-terminus, the 946-residue chain is C-1-tetrahydrofolate synthase, cytoplasmic (946 aa).

Residues 2 to 319 (AGQVLDGKAC…PPLPLKLLTP (318 aa)) are methylenetetrahydrofolate dehydrogenase and cyclohydrolase. Residues 51–55 (YVRMK) and 98–100 (VQL) each bind substrate. 169-171 (GRS) serves as a coordination point for NADP(+). At Ser-176 the chain carries Phosphoserine. Ser-194 is an NADP(+) binding site. Position 277 to 281 (277 to 281 (PGGVG)) interacts with substrate. Thr-318 is subject to Phosphothreonine. The formyltetrahydrofolate synthetase stretch occupies residues 320–946 (VPSDIDISRA…DDDGEIDGLF (627 aa)). A Phosphoserine modification is found at Ser-322. ATP is bound at residue 384-391 (TPLGEGKS).

This sequence in the N-terminal section; belongs to the tetrahydrofolate dehydrogenase/cyclohydrolase family. In the C-terminal section; belongs to the formate--tetrahydrofolate ligase family. Homodimer.

Its subcellular location is the cytoplasm. It is found in the nucleus. The enzyme catalyses (6R)-5,10-methylene-5,6,7,8-tetrahydrofolate + NADP(+) = (6R)-5,10-methenyltetrahydrofolate + NADPH. It catalyses the reaction (6R)-5,10-methenyltetrahydrofolate + H2O = (6R)-10-formyltetrahydrofolate + H(+). It carries out the reaction (6S)-5,6,7,8-tetrahydrofolate + formate + ATP = (6R)-10-formyltetrahydrofolate + ADP + phosphate. The protein operates within one-carbon metabolism; tetrahydrofolate interconversion. Cytoplasmic isozyme of C-1-tetrahydrofolate synthase. The trifunctional enzyme catalyzes the interconversion of the one-carbon derivatives of tetrahydrofolate (THF) between different oxidation states by the enzymatic activities 10-formyltetrahydrofolate synthetase, 5,lO-methenyltetrahydrofolate cyclohydrolase, and 5,lO-methylenetetrahydrofolate dehydrogenase. Involved in the generation of one-carbon intermediates in the biosynthesis of the purine bases. This is C-1-tetrahydrofolate synthase, cytoplasmic (ADE3) from Saccharomyces cerevisiae (strain ATCC 204508 / S288c) (Baker's yeast).